Here is a 691-residue protein sequence, read N- to C-terminus: MSAPARPAPAAPIRVAAGTTAGQAVRDAGLPSRGAPDAVVVVQDPDGRLRDLSWVPDADVDVIPVTADTEDGRSVIRHSAAHVLAQAVQALFPDAKLGIGPPITDGFYYDFEVAEPFTPEDLEALEKRMRQIVKDGQLFSRRVFESKDEAREELANEPYKLELIDDKSGDLESSDEIMEIGGDELTAYDNLNPRTRERVWGDLCRGPHIPTTRYIPAFKLTRSSAAYWRGDQNNASLQRIYGTAWESQEALDRHLELIEEAQKRDHRKLGVELDLFSFPDELGSGLPVFHPKGGVVRRELEEYSRRKHIEAGYEFVNTPHITKEHLYITSGHLEWYADGMFPAMHIDAEYNDDGTVRKPGQDYYLKPMNCPMHHLIYRSRGRSYRELPLRLFEFGSVYRYEKSGVVHGLTRVRGMTQDDAHIYCTREEMRDELARLLQFVLDLLADYGLDDFYLELSTKDPDKFVGSDDMWEEATETLREVAESSGLHLVPDPGGAAFYGPKISVQVRDALGRNWQMSTIQLDFNMPDRFELEYTAADGTRKRPVLIHRALFGSIERFFGVLTEHYAGAFPAWLAPVQVVGIPVADDHIRYLDGLVAQLRALGIRAEVDTSDDRMAKKIVNHTNQKVPFMLLAGDRDVEAEAVSFRFGDRTQVNGVPREQAVAAIVDWVTRRENATPTAELVEISAETGEG.

The region spanning 1 to 66 (MSAPARPAPA…DADVDVIPVT (66 aa)) is the TGS domain. The tract at residues 265–571 (DHRKLGVELD…LTEHYAGAFP (307 aa)) is catalytic. Positions 370, 421, and 548 each coordinate Zn(2+).

This sequence belongs to the class-II aminoacyl-tRNA synthetase family. In terms of assembly, homodimer. Zn(2+) is required as a cofactor.

It is found in the cytoplasm. It catalyses the reaction tRNA(Thr) + L-threonine + ATP = L-threonyl-tRNA(Thr) + AMP + diphosphate + H(+). Functionally, catalyzes the attachment of threonine to tRNA(Thr) in a two-step reaction: L-threonine is first activated by ATP to form Thr-AMP and then transferred to the acceptor end of tRNA(Thr). Also edits incorrectly charged L-seryl-tRNA(Thr). This chain is Threonine--tRNA ligase, found in Mycolicibacterium vanbaalenii (strain DSM 7251 / JCM 13017 / BCRC 16820 / KCTC 9966 / NRRL B-24157 / PYR-1) (Mycobacterium vanbaalenii).